The following is a 227-amino-acid chain: Flagellar L-ring protein (227 aa).

The N-terminal stretch at 1–16 is a signal peptide; the sequence is MRNIILFAAGTLLLSG. Residue cysteine 17 is the site of N-palmitoyl cysteine attachment. Cysteine 17 is lipidated: S-diacylglycerol cysteine.

It belongs to the FlgH family. The basal body constitutes a major portion of the flagellar organelle and consists of four rings (L,P,S, and M) mounted on a central rod.

It localises to the cell outer membrane. It is found in the bacterial flagellum basal body. Its function is as follows. Assembles around the rod to form the L-ring and probably protects the motor/basal body from shearing forces during rotation. In Pseudoalteromonas translucida (strain TAC 125), this protein is Flagellar L-ring protein.